Reading from the N-terminus, the 397-residue chain is Mycinamicin IV hydroxylase/epoxidase (397 aa).

A disordered region spans residues Arg63–Met86. The span at Thr68 to Met78 shows a compositional bias: basic and acidic residues. Gly81 lines the substrate pocket. Heme-binding residues include His91, Arg95, Arg288, His344, and Cys346.

This sequence belongs to the cytochrome P450 family. Heme serves as cofactor.

The protein operates within antibiotic biosynthesis; mycinamicin biosynthesis. In terms of biological role, involved in the biosynthesis of mycinamicin, a 16-membered macrolide antibiotic. Catalyzes consecutive hydroxylation (at C14) and epoxidation (at C12-C13) reactions with mycinamicin IV as initial substrate, leading to mycinamicin II. These reactions require prior dimethylation of 6-deoxyallose to mycinose for effective conversion by the dual function MycG enzyme. This Micromonospora griseorubida protein is Mycinamicin IV hydroxylase/epoxidase.